The sequence spans 127 residues: RxLR effector protein CRE6 (127 aa).

The signal sequence occupies residues 1–19 (MIRNALLVLVFVLIGTISA). The RxLR-dEER signature appears at 48 to 67 (RLLRQGSVKEGGVHDATEER).

This sequence belongs to the RxLR effector family.

It localises to the secreted. The protein localises to the host cell. Its function is as follows. Effector that is involved in host plant infection. Contributes to virulence during the early infection stage, by inhibiting plant defense responses induced by both PAMP-triggered immunity (PTI) and effector-triggered immunity (ETI). This chain is RxLR effector protein CRE6, found in Phytophthora infestans (strain T30-4) (Potato late blight agent).